The chain runs to 173 residues: Adenine phosphoribosyltransferase (173 aa).

This sequence belongs to the purine/pyrimidine phosphoribosyltransferase family. As to quaternary structure, homodimer.

The protein resides in the cytoplasm. It catalyses the reaction AMP + diphosphate = 5-phospho-alpha-D-ribose 1-diphosphate + adenine. Its pathway is purine metabolism; AMP biosynthesis via salvage pathway; AMP from adenine: step 1/1. Its function is as follows. Catalyzes a salvage reaction resulting in the formation of AMP, that is energically less costly than de novo synthesis. This Listeria monocytogenes serotype 4b (strain CLIP80459) protein is Adenine phosphoribosyltransferase.